We begin with the raw amino-acid sequence, 274 residues long: Bis(5'-nucleosyl)-tetraphosphatase, symmetrical (274 aa).

This sequence belongs to the Ap4A hydrolase family.

It catalyses the reaction P(1),P(4)-bis(5'-adenosyl) tetraphosphate + H2O = 2 ADP + 2 H(+). Hydrolyzes diadenosine 5',5'''-P1,P4-tetraphosphate to yield ADP. The polypeptide is Bis(5'-nucleosyl)-tetraphosphatase, symmetrical (Shewanella sediminis (strain HAW-EB3)).